The primary structure comprises 390 residues: Succinate--CoA ligase [ADP-forming] subunit beta (390 aa).

An ATP-grasp domain is found at 9–244; it reads KEIFREYGVP…LSEEDPVEVE (236 aa). ATP-binding positions include Lys46, 53-55, Glu99, Ala102, and Glu107; that span reads GRG. The Mg(2+) site is built by Asn199 and Asp213. Substrate contacts are provided by residues Asn264 and 321–323; that span reads GIV.

The protein belongs to the succinate/malate CoA ligase beta subunit family. Heterotetramer of two alpha and two beta subunits. It depends on Mg(2+) as a cofactor.

The enzyme catalyses succinate + ATP + CoA = succinyl-CoA + ADP + phosphate. The catalysed reaction is GTP + succinate + CoA = succinyl-CoA + GDP + phosphate. Its pathway is carbohydrate metabolism; tricarboxylic acid cycle; succinate from succinyl-CoA (ligase route): step 1/1. In terms of biological role, succinyl-CoA synthetase functions in the citric acid cycle (TCA), coupling the hydrolysis of succinyl-CoA to the synthesis of either ATP or GTP and thus represents the only step of substrate-level phosphorylation in the TCA. The beta subunit provides nucleotide specificity of the enzyme and binds the substrate succinate, while the binding sites for coenzyme A and phosphate are found in the alpha subunit. The sequence is that of Succinate--CoA ligase [ADP-forming] subunit beta from Nitratiruptor sp. (strain SB155-2).